The primary structure comprises 164 residues: uncharacterized protein (164 aa).

An HTH marR-type domain is found at 28-157; the sequence is EAEILYQLQG…LIDVLARMRN (130 aa). Residues 71–94 constitute a DNA-binding region (H-T-H motif); that stretch reads QSDLQKKVNIDSAAVTRHLKQLES.

This is an uncharacterized protein from Bacillus subtilis (strain 168).